Reading from the N-terminus, the 520-residue chain is Intermediate filament protein ON3 (520 aa).

Residues 1 to 27 (MSYTKKTSYSVKSSSSGSVPRSFSSMS) show a composition bias toward low complexity. A disordered region spans residues 1–33 (MSYTKKTSYSVKSSSSGSVPRSFSSMSYSGPSV). The segment at 1 to 108 (MSYTKKTSYS…DPNIQVVRTQ (108 aa)) is head. The segment at 109-144 (EKEQMKSLNNRFASFIDKVRFLEQQNKMLETKWSLL) is coil 1A. The IF rod domain occupies 109–420 (EKEQMKSLNN…KLLEGEEDRL (312 aa)). The segment at 145–157 (QNQTATRSNIDAM) is linker 1. The segment at 158 to 253 (FEAYINNLRR…QIFEEEIREL (96 aa)) is coil 1B. The tract at residues 254 to 273 (QSQIKDTSVVVEMDNSRNLD) is linker 12. Residues 274–420 (MDAIVAEVRA…KLLEGEEDRL (147 aa)) are coil 2. Residues 421–520 (LSGIKSVNIS…VSESSEVVQD (100 aa)) form a tail region.

It belongs to the intermediate filament family.

One of the non-neuronal predominant intermediate filament proteins of the visual pathway. The chain is Intermediate filament protein ON3 from Carassius auratus (Goldfish).